A 270-amino-acid polypeptide reads, in one-letter code: Formamidopyrimidine-DNA glycosylase (270 aa).

Residue Pro2 is the Schiff-base intermediate with DNA of the active site. The Proton donor role is filled by Glu3. Lys58 acts as the Proton donor; for beta-elimination activity in catalysis. DNA is bound by residues His91, Arg109, and Arg151. The FPG-type zinc-finger motif lies at 236–270 (LVYGRGGEACKTCQKPLKEIRMNDRTTVYCVTCQQ). The active-site Proton donor; for delta-elimination activity is Arg260.

This sequence belongs to the FPG family. As to quaternary structure, monomer. The cofactor is Zn(2+).

It catalyses the reaction Hydrolysis of DNA containing ring-opened 7-methylguanine residues, releasing 2,6-diamino-4-hydroxy-5-(N-methyl)formamidopyrimidine.. It carries out the reaction 2'-deoxyribonucleotide-(2'-deoxyribose 5'-phosphate)-2'-deoxyribonucleotide-DNA = a 3'-end 2'-deoxyribonucleotide-(2,3-dehydro-2,3-deoxyribose 5'-phosphate)-DNA + a 5'-end 5'-phospho-2'-deoxyribonucleoside-DNA + H(+). In terms of biological role, involved in base excision repair of DNA damaged by oxidation or by mutagenic agents. Acts as a DNA glycosylase that recognizes and removes damaged bases. Has a preference for oxidized purines, such as 7,8-dihydro-8-oxoguanine (8-oxoG). Has AP (apurinic/apyrimidinic) lyase activity and introduces nicks in the DNA strand. Cleaves the DNA backbone by beta-delta elimination to generate a single-strand break at the site of the removed base with both 3'- and 5'-phosphates. This chain is Formamidopyrimidine-DNA glycosylase, found in Cellvibrio japonicus (strain Ueda107) (Pseudomonas fluorescens subsp. cellulosa).